Consider the following 94-residue polypeptide: Probable Fe(2+)-trafficking protein (94 aa).

The protein belongs to the Fe(2+)-trafficking protein family.

Could be a mediator in iron transactions between iron acquisition and iron-requiring processes, such as synthesis and/or repair of Fe-S clusters in biosynthetic enzymes. The protein is Probable Fe(2+)-trafficking protein of Marinomonas sp. (strain MWYL1).